Here is a 513-residue protein sequence, read N- to C-terminus: MAISKVWISLLLALAVVLSAPAARAEEAAAAEEAAAPEAVLTLHADNFDDAIGQHPFILVEFYAPWCGHCKSLAPEYEKAAQLLSKHDPAIVLAKVDANDEKNKPLAGKYEVQGFPTLKIFRNGGKSIQEYKGPREAEGIVEYLKKQVGPASKEIKAPEDATYLEDGKIHIVGVFTEFSGPEFTNFLEVAEKLRSYYDFGHTVHANHLPRGDAAVERPVVRLFKPFDELVVDSKDFDVSALEKFIDASSTPKVVIFDKNPDNHPYLLKFFQSNAPKAMLFLNFSTGPFESFKSAYYGAVEEFSGKDVKFLIGDIESSQGAFQYFGLKVDQAPLILIQDGDSKKFLKEHVEAGQIVAWLKDYFDGKLTPFRKSEPIPEANNEPVKVVVADNVHDVVFKSGKNVLIEFYAPWCGHCKKLAPILDEAAATLQSEEDVVIAKMDATENDVPGEFDVQGYPTLYFVTPSGKKVSYEGGRTADEIVDYIRKNKETAGQAAAATEKAAEPAATEPLKDEL.

A signal peptide spans 1–25 (MAISKVWISLLLALAVVLSAPAARA). The Thioredoxin 1 domain occupies 26–149 (EEAAAAEEAA…IVEYLKKQVG (124 aa)). Residues C67 and C70 each act as nucleophile in the active site. C67 and C70 are joined by a disulfide. N-linked (GlcNAc...) asparagine glycosylation occurs at N282. A Thioredoxin 2 domain is found at 369–488 (FRKSEPIPEA…IVDYIRKNKE (120 aa)). Active-site nucleophile residues include C411 and C414. A disulfide bond links C411 and C414. The segment covering 491–507 (GQAAAATEKAAEPAATE) has biased composition (low complexity). Positions 491–513 (GQAAAATEKAAEPAATEPLKDEL) are disordered. A Prevents secretion from ER motif is present at residues 510-513 (KDEL).

Belongs to the protein disulfide isomerase family.

The protein resides in the endoplasmic reticulum lumen. The enzyme catalyses Catalyzes the rearrangement of -S-S- bonds in proteins.. In terms of biological role, participates in the folding of proteins containing disulfide bonds, may be involved in glycosylation, prolyl hydroxylation and triglyceride transfer. In Hordeum vulgare (Barley), this protein is Protein disulfide-isomerase (PDI).